A 95-amino-acid polypeptide reads, in one-letter code: Large ribosomal subunit protein bL25 (95 aa).

Belongs to the bacterial ribosomal protein bL25 family. Part of the 50S ribosomal subunit; part of the 5S rRNA/L5/L18/L25 subcomplex. Contacts the 5S rRNA. Binds to the 5S rRNA independently of L5 and L18.

Functionally, this is one of the proteins that binds to the 5S RNA in the ribosome where it forms part of the central protuberance. The polypeptide is Large ribosomal subunit protein bL25 (Yersinia enterocolitica serotype O:8 / biotype 1B (strain NCTC 13174 / 8081)).